A 590-amino-acid chain; its full sequence is Tape measure protein (590 aa).

3 disordered regions span residues 1–35 (MKKP…LSGL), 147–185 (ESVG…EEKQ), and 515–535 (LKKN…EAKQ). The segment covering 176–185 (PKQESPEEKQ) has biased composition (basic and acidic residues).

Its subcellular location is the virion. Serves as a base for tail tube protein polymerization and acts as a template for tail length determination. This is Tape measure protein (29) from Escherichia coli (Bacteriophage T4).